The primary structure comprises 253 residues: Ubiquinone/menaquinone biosynthesis C-methyltransferase UbiE (253 aa).

Residues threonine 76, aspartate 97, and 125–126 (DA) contribute to the S-adenosyl-L-methionine site.

Belongs to the class I-like SAM-binding methyltransferase superfamily. MenG/UbiE family.

It catalyses the reaction a 2-demethylmenaquinol + S-adenosyl-L-methionine = a menaquinol + S-adenosyl-L-homocysteine + H(+). The catalysed reaction is a 2-methoxy-6-(all-trans-polyprenyl)benzene-1,4-diol + S-adenosyl-L-methionine = a 5-methoxy-2-methyl-3-(all-trans-polyprenyl)benzene-1,4-diol + S-adenosyl-L-homocysteine + H(+). The protein operates within quinol/quinone metabolism; menaquinone biosynthesis; menaquinol from 1,4-dihydroxy-2-naphthoate: step 2/2. Its pathway is cofactor biosynthesis; ubiquinone biosynthesis. Its function is as follows. Methyltransferase required for the conversion of demethylmenaquinol (DMKH2) to menaquinol (MKH2) and the conversion of 2-polyprenyl-6-methoxy-1,4-benzoquinol (DDMQH2) to 2-polyprenyl-3-methyl-6-methoxy-1,4-benzoquinol (DMQH2). This is Ubiquinone/menaquinone biosynthesis C-methyltransferase UbiE from Azotobacter vinelandii (strain DJ / ATCC BAA-1303).